We begin with the raw amino-acid sequence, 609 residues long: Dihydroxy-acid dehydratase (609 aa).

Residue Asp82 coordinates Mg(2+). Cys123 contributes to the [2Fe-2S] cluster binding site. Residues Asp124 and Lys125 each contribute to the Mg(2+) site. Lys125 carries the post-translational modification N6-carboxylysine. Cys192 is a binding site for [2Fe-2S] cluster. Glu489 lines the Mg(2+) pocket. The active-site Proton acceptor is Ser515.

It belongs to the IlvD/Edd family. Homodimer. [2Fe-2S] cluster serves as cofactor. Requires Mg(2+) as cofactor.

It catalyses the reaction (2R)-2,3-dihydroxy-3-methylbutanoate = 3-methyl-2-oxobutanoate + H2O. The catalysed reaction is (2R,3R)-2,3-dihydroxy-3-methylpentanoate = (S)-3-methyl-2-oxopentanoate + H2O. The protein operates within amino-acid biosynthesis; L-isoleucine biosynthesis; L-isoleucine from 2-oxobutanoate: step 3/4. It functions in the pathway amino-acid biosynthesis; L-valine biosynthesis; L-valine from pyruvate: step 3/4. Functions in the biosynthesis of branched-chain amino acids. Catalyzes the dehydration of (2R,3R)-2,3-dihydroxy-3-methylpentanoate (2,3-dihydroxy-3-methylvalerate) into 2-oxo-3-methylpentanoate (2-oxo-3-methylvalerate) and of (2R)-2,3-dihydroxy-3-methylbutanoate (2,3-dihydroxyisovalerate) into 2-oxo-3-methylbutanoate (2-oxoisovalerate), the penultimate precursor to L-isoleucine and L-valine, respectively. This is Dihydroxy-acid dehydratase from Azobacteroides pseudotrichonymphae genomovar. CFP2.